The sequence spans 89 residues: MIRQQKRLTIILLLLGVDKRDYSSCNVKTLLYSIRDYAKSVNDHEILTESNRLLSHCISDSNGAFFKSSKYVPLKYLRKRRIARKIPND.

This is an uncharacterized protein from Shigella flexneri.